Reading from the N-terminus, the 362-residue chain is uncharacterized protein (362 aa).

The helical transmembrane segment at 13–33 (VLILSVGLNMLFLLLFYSAIF) threads the bilayer. Residues 314–357 (EEYVVQDGDSLWLIAKRFGIPMDKIIQKNGLNHHRLFPGKVLKL) enclose the LysM domain.

This sequence belongs to the chlamydial CPn_0593/CT_474/TC_0759 family.

The protein localises to the membrane. This is an uncharacterized protein from Chlamydia pneumoniae (Chlamydophila pneumoniae).